Consider the following 73-residue polypeptide: UPF0499 protein NFIA_054990 (73 aa).

The signal sequence occupies residues 1-20; sequence MKSFNLLSLSLLLAIASAAA. Intrachain disulfides connect C46–C60, C50–C63, and C56–C70.

The protein belongs to the UPF0499 family.

The protein resides in the secreted. In Neosartorya fischeri (strain ATCC 1020 / DSM 3700 / CBS 544.65 / FGSC A1164 / JCM 1740 / NRRL 181 / WB 181) (Aspergillus fischerianus), this protein is UPF0499 protein NFIA_054990.